The chain runs to 245 residues: 2-C-methyl-D-erythritol 4-phosphate cytidylyltransferase (245 aa).

This sequence belongs to the IspD/TarI cytidylyltransferase family. IspD subfamily.

The catalysed reaction is 2-C-methyl-D-erythritol 4-phosphate + CTP + H(+) = 4-CDP-2-C-methyl-D-erythritol + diphosphate. It functions in the pathway isoprenoid biosynthesis; isopentenyl diphosphate biosynthesis via DXP pathway; isopentenyl diphosphate from 1-deoxy-D-xylulose 5-phosphate: step 2/6. In terms of biological role, catalyzes the formation of 4-diphosphocytidyl-2-C-methyl-D-erythritol from CTP and 2-C-methyl-D-erythritol 4-phosphate (MEP). The protein is 2-C-methyl-D-erythritol 4-phosphate cytidylyltransferase of Chloroherpeton thalassium (strain ATCC 35110 / GB-78).